The following is an 891-amino-acid chain: von Willebrand factor A domain-containing protein 7 (891 aa).

The first 28 residues, Met1–Ala28, serve as a signal peptide directing secretion. Asn55 carries N-linked (GlcNAc...) asparagine glycosylation. The interval Pro237 to Pro272 is disordered. In terms of domain architecture, VWFA spans Ala313–Leu506.

As to expression, expressed at low level in different cell lines.

The protein localises to the secreted. This is von Willebrand factor A domain-containing protein 7 (VWA7) from Homo sapiens (Human).